We begin with the raw amino-acid sequence, 588 residues long: Phosphoinositide phosphatase SAC8 (588 aa).

Residues 37-56 (FSVNRRDGNIKPLDENASSG) form a disordered region. Over residues 40-50 (NRRDGNIKPLD) the composition is skewed to basic and acidic residues. Positions 129–455 (LQALETTPGL…GDEVSLQYAG (327 aa)) constitute an SAC domain. The Phosphatase catalytic core motif lies at 390–401 (RSNCIDCLDRTN). 2 consecutive transmembrane segments (helical) span residues 524–544 (SFLPVASALLIGGVTVTSFTI) and 555–575 (LASALWAGVTAGVVAMIKANG).

In terms of tissue distribution, ubiquitous with a higher level of expression in young seedlings than in other tissues.

The protein resides in the endoplasmic reticulum membrane. Its function is as follows. Phosphoinositide phosphatase that hydrolyzes PtdIns(3)P and PtdIns(4)P. The chain is Phosphoinositide phosphatase SAC8 (SAC8) from Arabidopsis thaliana (Mouse-ear cress).